The sequence spans 560 residues: Membrane protein insertase YidC (560 aa).

A helical transmembrane segment spans residues 7-27; it reads ILIVALAIVSYVMVLKWNQDY. The disordered stretch occupies residues 43 to 72; the sequence is APAIPDTPLGNNASASADVPSANGETSAPL. 4 consecutive transmembrane segments (helical) span residues 367–387, 437–457, 468–488, and 515–535; these read IVGN…GIFF, LGGC…YWVL, FMLW…PIIM, and PIIF…YWVV.

It belongs to the OXA1/ALB3/YidC family. Type 1 subfamily. Interacts with the Sec translocase complex via SecD. Specifically interacts with transmembrane segments of nascent integral membrane proteins during membrane integration.

Its subcellular location is the cell inner membrane. Functionally, required for the insertion and/or proper folding and/or complex formation of integral membrane proteins into the membrane. Involved in integration of membrane proteins that insert both dependently and independently of the Sec translocase complex, as well as at least some lipoproteins. Aids folding of multispanning membrane proteins. This Pseudomonas fluorescens (strain SBW25) protein is Membrane protein insertase YidC.